A 124-amino-acid polypeptide reads, in one-letter code: Small ribosomal subunit protein eS8 (124 aa).

Over residues 1 to 22 (MQYQGRSKRSKTGARLRPRSKK) the composition is skewed to basic residues. Disordered stretches follow at residues 1 to 40 (MQYQ…GEPR) and 102 to 124 (AGTA…RVDE). The span at 23 to 32 (SKSELGREPT) shows a compositional bias: basic and acidic residues. Over residues 106–124 (RVTSRPGQDGQVNATRVDE) the composition is skewed to polar residues.

The protein belongs to the eukaryotic ribosomal protein eS8 family. Part of the 30S ribosomal subunit.

This chain is Small ribosomal subunit protein eS8, found in Halobacterium salinarum (strain ATCC 29341 / DSM 671 / R1).